The sequence spans 42 residues: Photosystem I reaction center subunit IX (42 aa).

A helical transmembrane segment spans residues 7 to 27 (YLSTAPVLAAIWFGILAGLLI).

Belongs to the PsaJ family.

The protein localises to the plastid. It is found in the chloroplast thylakoid membrane. In terms of biological role, may help in the organization of the PsaE and PsaF subunits. The polypeptide is Photosystem I reaction center subunit IX (Staurastrum punctulatum (Green alga)).